A 270-amino-acid chain; its full sequence is 4-hydroxy-tetrahydrodipicolinate reductase (270 aa).

NAD(+) is bound at residue 7 to 12 (GANGKM). Residue R34 coordinates NADP(+). NAD(+)-binding positions include 97–99 (GTT) and 121–124 (SGNM). H155 serves as the catalytic Proton donor/acceptor. H156 contacts (S)-2,3,4,5-tetrahydrodipicolinate. K159 (proton donor) is an active-site residue. A (S)-2,3,4,5-tetrahydrodipicolinate-binding site is contributed by 165–166 (GT).

This sequence belongs to the DapB family.

Its subcellular location is the cytoplasm. It catalyses the reaction (S)-2,3,4,5-tetrahydrodipicolinate + NAD(+) + H2O = (2S,4S)-4-hydroxy-2,3,4,5-tetrahydrodipicolinate + NADH + H(+). The enzyme catalyses (S)-2,3,4,5-tetrahydrodipicolinate + NADP(+) + H2O = (2S,4S)-4-hydroxy-2,3,4,5-tetrahydrodipicolinate + NADPH + H(+). It functions in the pathway amino-acid biosynthesis; L-lysine biosynthesis via DAP pathway; (S)-tetrahydrodipicolinate from L-aspartate: step 4/4. In terms of biological role, catalyzes the conversion of 4-hydroxy-tetrahydrodipicolinate (HTPA) to tetrahydrodipicolinate. The protein is 4-hydroxy-tetrahydrodipicolinate reductase of Bartonella quintana (strain Toulouse) (Rochalimaea quintana).